The following is a 393-amino-acid chain: Prokineticin receptor 1 (393 aa).

At 1–62 the chain is on the extracellular side; sequence METTVGTLGE…TNSRTFFAAK (62 aa). An N-linked (GlcNAc...) asparagine glycan is attached at Asn-11. A helical membrane pass occupies residues 63–83; the sequence is IVIGMALVGIMLVCGIGNFIF. The Cytoplasmic segment spans residues 84–98; sequence ITALARYKKLRNLTN. A helical transmembrane segment spans residues 99–119; it reads LLIANLAISDFLVAIVCCPFE. The Extracellular portion of the chain corresponds to 120 to 145; sequence MDYYVVRQLSWEHGHVLCASVNYLRT. Cysteines 137 and 217 form a disulfide. A helical membrane pass occupies residues 146–166; the sequence is VSLYVSTNALLAIAIDRYLAI. Topologically, residues 167 to 179 are cytoplasmic; it reads VHPLRPRMKCQTA. A helical membrane pass occupies residues 180–200; that stretch reads AGLIFLVWSVSILIAIPAAYF. The Extracellular segment spans residues 201-232; that stretch reads TTETVLVIVESQEKIFCGQIWPVDQQFYYRSY. A helical membrane pass occupies residues 233–253; the sequence is FLLVFGLEFVGPVIAMTLCYA. Residues 254–282 are Cytoplasmic-facing; that stretch reads RVSRELWFKAVPGFQTEQIRRRLRCRRRT. A helical membrane pass occupies residues 283–303; that stretch reads VLGLVCVLSAYVLCWAPFYGF. Residues 304–322 lie on the Extracellular side of the membrane; sequence TIVRDFFPSVFVKEKHYLT. Residues 323-343 traverse the membrane as a helical segment; that stretch reads AFYVVECIAMSNSMINTLCFV. At 344–393 the chain is on the cytoplasmic side; sequence TVRNNTSKYLKRILRLQWRASPSGSKASADLDLRTTGIPATEEVDCIRLK.

The protein belongs to the G-protein coupled receptor 1 family. In terms of tissue distribution, widely expressed in peripheral tissues with the highest level in the spleen and moderate levels in the adipose tissues, thymus, lung, kidney, testis, uterus and small intestine.

Its subcellular location is the cell membrane. Receptor for prokineticin 1. Exclusively coupled to the G(q) subclass of heteromeric G proteins. Activation leads to mobilization of calcium, stimulation of phosphoinositide turnover and activation of p44/p42 mitogen-activated protein kinase. May play a role during early pregnancy. The sequence is that of Prokineticin receptor 1 (Prokr1) from Rattus norvegicus (Rat).